The primary structure comprises 613 residues: Ribosome-associated molecular chaperone SSB (613 aa).

The tract at residues 1 to 391 is nucleotide binding domain (NBD); it reads MADGVFQGAI…ILTGQSTSDE (391 aa). ATP is bound by residues 16–18, Lys73, 205–207, 271–278, and Gly342; these read TTY, GGT, and ERAKRTLS. The inter-domain linker stretch occupies residues 392–402; sequence TKDLLLLDVAP. Residues 403 to 613 form a substrate binding domain (SBD) region; it reads LSLGVGMQGD…RVVTKAMSSR (211 aa). Residues 516 to 612 form a lid domain (SBDalpha) region; that stretch reads SEDIEKMVNQ…KRVVTKAMSS (97 aa). Positions 574 to 582 match the Nuclear export signal motif; the sequence is IEAALADAL.

It belongs to the heat shock protein 70 family. Ssb-type Hsp70 subfamily. Binds to ribosomes. Binds close to the ribosomal tunnel exit via contacts with both ribosomal proteins and rRNA. Directly interacts with nascent polypeptides. This interaction is dependent on the ribosome-associated complex (RAC). Interacts with SSE1. Interacts with FES1.

It localises to the cytoplasm. It catalyses the reaction ATP + H2O = ADP + phosphate + H(+). In terms of biological role, ribosome-bound, Hsp70-type chaperone that assists in the cotranslational folding of newly synthesized proteins in the cytosol. Stimulates folding by interacting with nascent chains, binding to short, largely hydrophobic sequences exposed by unfolded proteins, thereby stabilizing longer, more slowly translated, and aggregation-prone nascent polypeptides and domains that cannot fold stably until fully synthesized. The Hsp70-protein substrate interaction depends on ATP-binding and on allosteric regulation between the NBD and the SBD. The ATP-bound state is characterized by a fast exchange rate of substrate (low affinity state), while in the ADP-bound state exchange is much slower (high affinity state). During the Hsp70 cycle, the chaperone switches between the ATP-bound state (open conformation) and the ADP-bound state (closed conformation) by major conformational rearrangements involving mainly the lid domain. Ssb cooperates with a specific Hsp40/Hsp70 co-chaperone termed the ribosome-associated complex (RAC), which stimulates the ATPase activity of the ribosome-associated pool of Ssbs and switches it to the high affinity substrate binding state. Hsp110 chaperone SSE1 and FES1 act as nucleotide exchange factors that cause substrate release. In Candida glabrata (strain ATCC 2001 / BCRC 20586 / JCM 3761 / NBRC 0622 / NRRL Y-65 / CBS 138) (Yeast), this protein is Ribosome-associated molecular chaperone SSB (SSB1).